The chain runs to 439 residues: Serine--tRNA ligase (439 aa).

242–244 is an L-serine binding site; that stretch reads TAE. 273–275 is a binding site for ATP; that stretch reads RQE. Residue Glu-296 coordinates L-serine. 360-363 provides a ligand contact to ATP; sequence EISS. Ser-396 is an L-serine binding site.

Belongs to the class-II aminoacyl-tRNA synthetase family. Type-1 seryl-tRNA synthetase subfamily. In terms of assembly, homodimer. The tRNA molecule binds across the dimer.

The protein localises to the cytoplasm. The enzyme catalyses tRNA(Ser) + L-serine + ATP = L-seryl-tRNA(Ser) + AMP + diphosphate + H(+). It catalyses the reaction tRNA(Sec) + L-serine + ATP = L-seryl-tRNA(Sec) + AMP + diphosphate + H(+). The protein operates within aminoacyl-tRNA biosynthesis; selenocysteinyl-tRNA(Sec) biosynthesis; L-seryl-tRNA(Sec) from L-serine and tRNA(Sec): step 1/1. In terms of biological role, catalyzes the attachment of serine to tRNA(Ser). Is also able to aminoacylate tRNA(Sec) with serine, to form the misacylated tRNA L-seryl-tRNA(Sec), which will be further converted into selenocysteinyl-tRNA(Sec). This Oenococcus oeni (strain ATCC BAA-331 / PSU-1) protein is Serine--tRNA ligase.